Reading from the N-terminus, the 100-residue chain is Urease subunit gamma (100 aa).

This sequence belongs to the urease gamma subunit family. As to quaternary structure, heterotrimer of UreA (gamma), UreB (beta) and UreC (alpha) subunits. Three heterotrimers associate to form the active enzyme.

The protein resides in the cytoplasm. The catalysed reaction is urea + 2 H2O + H(+) = hydrogencarbonate + 2 NH4(+). It functions in the pathway nitrogen metabolism; urea degradation; CO(2) and NH(3) from urea (urease route): step 1/1. The chain is Urease subunit gamma from Prochlorococcus marinus (strain MIT 9303).